A 440-amino-acid chain; its full sequence is tRNA-2-methylthio-N(6)-dimethylallyladenosine synthase (440 aa).

Positions 2–117 (KGLYIKTYGC…LPELIVKASR (116 aa)) constitute an MTTase N-terminal domain. [4Fe-4S] cluster contacts are provided by Cys11, Cys47, Cys80, Cys157, Cys161, and Cys164. The Radical SAM core domain maps to 143 to 374 (NSQGSSAFLA…QELISKQQLE (232 aa)). Residues 377–440 (QSMIGKTIPV…RQNSLLGCAA (64 aa)) enclose the TRAM domain.

The protein belongs to the methylthiotransferase family. MiaB subfamily. As to quaternary structure, monomer. The cofactor is [4Fe-4S] cluster.

It localises to the cytoplasm. It catalyses the reaction N(6)-dimethylallyladenosine(37) in tRNA + (sulfur carrier)-SH + AH2 + 2 S-adenosyl-L-methionine = 2-methylsulfanyl-N(6)-dimethylallyladenosine(37) in tRNA + (sulfur carrier)-H + 5'-deoxyadenosine + L-methionine + A + S-adenosyl-L-homocysteine + 2 H(+). Catalyzes the methylthiolation of N6-(dimethylallyl)adenosine (i(6)A), leading to the formation of 2-methylthio-N6-(dimethylallyl)adenosine (ms(2)i(6)A) at position 37 in tRNAs that read codons beginning with uridine. The polypeptide is tRNA-2-methylthio-N(6)-dimethylallyladenosine synthase (Wolbachia pipientis subsp. Culex pipiens (strain wPip)).